A 637-amino-acid polypeptide reads, in one-letter code: Phosphomethylpyrimidine synthase (637 aa).

Substrate-binding positions include N242, M271, Y300, H336, 356-358 (SRG), 397-400 (DGLR), and E436. H440 lines the Zn(2+) pocket. Y463 serves as a coordination point for substrate. Residue H504 participates in Zn(2+) binding. [4Fe-4S] cluster-binding residues include C584, C587, and C592.

It belongs to the ThiC family. Homodimer. The cofactor is [4Fe-4S] cluster.

It carries out the reaction 5-amino-1-(5-phospho-beta-D-ribosyl)imidazole + S-adenosyl-L-methionine = 4-amino-2-methyl-5-(phosphooxymethyl)pyrimidine + CO + 5'-deoxyadenosine + formate + L-methionine + 3 H(+). Its pathway is cofactor biosynthesis; thiamine diphosphate biosynthesis. Functionally, catalyzes the synthesis of the hydroxymethylpyrimidine phosphate (HMP-P) moiety of thiamine from aminoimidazole ribotide (AIR) in a radical S-adenosyl-L-methionine (SAM)-dependent reaction. This is Phosphomethylpyrimidine synthase from Janthinobacterium sp. (strain Marseille) (Minibacterium massiliensis).